The following is a 54-amino-acid chain: VILLLLIASIPSDAVQLKTKDDMPLASFHGNARRTLQMLSNKRICCYPNEWCCD.

The first 14 residues, 1–14, serve as a signal peptide directing secretion; that stretch reads VILLLLIASIPSDA. Residues 15–43 constitute a propeptide that is removed on maturation; sequence VQLKTKDDMPLASFHGNARRTLQMLSNKR. Glu50 is subject to 4-carboxyglutamate. Position 51 is a 6'-bromotryptophan (Trp51).

It belongs to the conotoxin T superfamily. In terms of processing, contains 2 disulfide bonds that can be either 'C1-C3, C2-C4' or 'C1-C4, C2-C3', since these disulfide connectivities have been observed for conotoxins with cysteine framework V (for examples, see AC P0DQQ7 and AC P81755). As to expression, expressed by the venom duct.

The protein resides in the secreted. The polypeptide is Conotoxin vc5c (Conus victoriae (Queen Victoria cone)).